Reading from the N-terminus, the 218-residue chain is Eukaryotic translation initiation factor 4E-1 (218 aa).

Residues 1–11 (MQTEQPPKESQ) are compositionally biased toward basic and acidic residues. 2 disordered regions span residues 1–20 (MQTEQPPKESQTENTVSEPQ) and 198–218 (FSAHEDSSKSGSTRAKTRMSV). Residues 206 to 218 (KSGSTRAKTRMSV) show a composition bias toward polar residues.

Belongs to the eukaryotic initiation factor 4E family. As to quaternary structure, eIF4F is a multi-subunit complex, the composition of which varies with external and internal environmental conditions. It is composed of at least eIF4A, eIF4E and eIF4G. eIF4E is also known to interact with other partners.

Recognizes and binds the 7-methylguanosine-containing mRNA cap during an early step in the initiation of protein synthesis and facilitates ribosome binding by inducing the unwinding of the mRNAs secondary structures. The sequence is that of Eukaryotic translation initiation factor 4E-1 (tif451) from Schizosaccharomyces pombe (strain 972 / ATCC 24843) (Fission yeast).